A 259-amino-acid polypeptide reads, in one-letter code: TCF3 fusion partner homolog (259 aa).

Disordered regions lie at residues G50 to R72 and E141 to Q210. S167 is modified (phosphoserine). Residues S167–P178 are compositionally biased toward polar residues. The residue at position 172 (T172) is a Phosphothreonine. Phosphoserine is present on residues S180 and S188. Phosphothreonine is present on T203. K222 participates in a covalent cross-link: Glycyl lysine isopeptide (Lys-Gly) (interchain with G-Cter in SUMO2). At S255 the chain carries Phosphoserine.

As to quaternary structure, interacts with NOL3; translocates NOL3 into the nucleus and negatively regulated TFPT-induced cell death. Component of the chromatin remodeling INO80 complex; specifically part of a complex module associated with the N-terminus of INO80.

The protein localises to the nucleus. Appears to promote apoptosis in a p53/TP53-independent manner. Functionally, putative regulatory component of the chromatin remodeling INO80 complex which is involved in transcriptional regulation, DNA replication and probably DNA repair. The protein is TCF3 fusion partner homolog (Tfpt) of Mus musculus (Mouse).